A 339-amino-acid polypeptide reads, in one-letter code: UPF0324 membrane protein SpyM3_0740 (339 aa).

The next 9 membrane-spanning stretches (helical) occupy residues 7–24 (KLPG…AWYL), 28–50 (FPII…FYHH), 57–79 (GISF…GLNL), 84–106 (AVGM…VAYG), 118–140 (ATLV…APVI), 150–172 (AISV…GQLL), 256–275 (FILF…SLGV), 290–307 (FIVM…LVKL), and 314–336 (AILL…QLSL).

The protein belongs to the UPF0324 family.

It is found in the cell membrane. The protein is UPF0324 membrane protein SpyM3_0740 of Streptococcus pyogenes serotype M3 (strain ATCC BAA-595 / MGAS315).